The primary structure comprises 461 residues: 3-deoxy-D-manno-octulosonic acid transferase (461 aa).

Residues 2-22 (MLLYYTLSFILLPVYFIIIFI) form a helical; Signal-anchor membrane-spanning segment. The region spanning 47-88 (SALDFIQMSVNKEGFTDHKTTSYVDMHRNASLMYKLSLERSY) is the RPE1 insert domain. Residue E102 is the Proton acceptor of the active site. Residues 306-307 (PR), 347-349 (FGE), and 372-375 (NILE) each bind CMP.

Belongs to the glycosyltransferase group 1 family. Glycosyltransferase 30 subfamily.

The protein resides in the cell inner membrane. It catalyses the reaction lipid IVA (E. coli) + CMP-3-deoxy-beta-D-manno-octulosonate = alpha-Kdo-(2-&gt;6)-lipid IVA (E. coli) + CMP + H(+). The protein operates within bacterial outer membrane biogenesis; LPS core biosynthesis. Functionally, involved in lipopolysaccharide (LPS) biosynthesis. Catalyzes the transfer of 3-deoxy-D-manno-octulosonate (Kdo) residue(s) from CMP-Kdo to lipid IV(A), the tetraacyldisaccharide-1,4'-bisphosphate precursor of lipid A. This is 3-deoxy-D-manno-octulosonic acid transferase (waaA) from Rickettsia prowazekii (strain Madrid E).